Reading from the N-terminus, the 183-residue chain is Large ribosomal subunit protein eL18 (183 aa).

Residues 151–183 (HFGPAPGAPRSHTKPYVRSKGHEQAKPSRRSNV) form a disordered region.

This sequence belongs to the eukaryotic ribosomal protein eL18 family.

It is found in the cytoplasm. The chain is Large ribosomal subunit protein eL18 (RpL18) from Plutella xylostella (Diamondback moth).